The following is a 393-amino-acid chain: Xylose transport system permease protein XylH (393 aa).

At 1-24 the chain is on the periplasmic side; that stretch reads MSKSNPSEVKLAVPTSGGFSGLKS. Residues 25-45 form a helical membrane-spanning segment; the sequence is LNLQVFVMIAAIIAIMLFFTW. The Cytoplasmic portion of the chain corresponds to 46–64; that stretch reads TTDGAYLSARNVSNLLRQT. Residues 65 to 85 traverse the membrane as a helical segment; it reads AITGILAVGMVFVIISAEIDL. The Periplasmic portion of the chain corresponds to 86 to 102; it reads SVGSMMGLLGGVAAICD. The chain crosses the membrane as a helical span at residues 103 to 123; it reads VWLGWPLPLTIIVTLVLGLLL. At 124-135 the chain is on the cytoplasmic side; it reads GAWNGWWVAYRK. The chain crosses the membrane as a helical span at residues 136–156; the sequence is VPSFIVTLAGMLAFRGILIGI. Over 157–175 the chain is Periplasmic; sequence TNGTTVSPTSAAMSQIGQS. The helical transmembrane segment at 176 to 196 threads the bilayer; sequence YLPASTGFIIGALGLMAFVGW. At 197-214 the chain is on the cytoplasmic side; sequence QWRGRMRRQALGLQSPAS. Residues 215 to 235 form a helical membrane-spanning segment; it reads TAVVGRQALTAIIVLGAIWLL. Residues 236–239 lie on the Periplasmic side of the membrane; that stretch reads NDYR. The chain crosses the membrane as a helical span at residues 240–260; that stretch reads GVPTPVLLLTLLLLGGMFMAT. Residues 261–287 are Cytoplasmic-facing; it reads RTAFGRRIYAIGGNLEAARLSGINVER. Residues 288 to 308 traverse the membrane as a helical segment; sequence TKLAVFAINGLMVAIAGLILS. Over 309-312 the chain is Periplasmic; sequence SRLG. The chain crosses the membrane as a helical span at residues 313 to 333; sequence AGSPSAGNIAELDAIAACVIG. The Cytoplasmic portion of the chain corresponds to 334-336; it reads GTS. The chain crosses the membrane as a helical span at residues 337–357; sequence LAGGVGSVAGAVMGAFIMASL. At 358-365 the chain is on the periplasmic side; the sequence is DNGMSMMD. Residues 366–386 traverse the membrane as a helical segment; it reads VPTFWQYIVKGAILLLAVWMD. Over 387-393 the chain is Cytoplasmic; that stretch reads SATKRRS.

This sequence belongs to the binding-protein-dependent transport system permease family. AraH/RbsC subfamily.

It is found in the cell inner membrane. In terms of biological role, part of the binding-protein-dependent transport system for D-xylose. Probably responsible for the translocation of the substrate across the membrane. This is Xylose transport system permease protein XylH (xylH) from Escherichia coli O6:H1 (strain CFT073 / ATCC 700928 / UPEC).